The sequence spans 434 residues: Serine hydroxymethyltransferase (434 aa).

Residues leucine 133 and 137–139 (GHL) contribute to the (6S)-5,6,7,8-tetrahydrofolate site. Position 242 is an N6-(pyridoxal phosphate)lysine (lysine 242). 366–368 (SPF) contacts (6S)-5,6,7,8-tetrahydrofolate.

It belongs to the SHMT family. Homodimer. Pyridoxal 5'-phosphate serves as cofactor.

The protein resides in the cytoplasm. It catalyses the reaction (6R)-5,10-methylene-5,6,7,8-tetrahydrofolate + glycine + H2O = (6S)-5,6,7,8-tetrahydrofolate + L-serine. It functions in the pathway one-carbon metabolism; tetrahydrofolate interconversion. The protein operates within amino-acid biosynthesis; glycine biosynthesis; glycine from L-serine: step 1/1. In terms of biological role, catalyzes the reversible interconversion of serine and glycine with tetrahydrofolate (THF) serving as the one-carbon carrier. This reaction serves as the major source of one-carbon groups required for the biosynthesis of purines, thymidylate, methionine, and other important biomolecules. Also exhibits THF-independent aldolase activity toward beta-hydroxyamino acids, producing glycine and aldehydes, via a retro-aldol mechanism. The polypeptide is Serine hydroxymethyltransferase (Erythrobacter litoralis (strain HTCC2594)).